The primary structure comprises 324 residues: Adenine deaminase (324 aa).

3 residues coordinate Zn(2+): His-11, His-13, and His-189. The active-site Proton donor is Glu-192. A Zn(2+)-binding site is contributed by Asp-270. Asp-271 contributes to the substrate binding site.

The protein belongs to the metallo-dependent hydrolases superfamily. Adenosine and AMP deaminases family. Adenine deaminase type 2 subfamily. The cofactor is Zn(2+).

It catalyses the reaction adenine + H2O + H(+) = hypoxanthine + NH4(+). Its function is as follows. Catalyzes the hydrolytic deamination of adenine to hypoxanthine. Plays an important role in the purine salvage pathway and in nitrogen catabolism. The chain is Adenine deaminase from Sinorhizobium fredii (strain NBRC 101917 / NGR234).